The following is an 89-amino-acid chain: Small ribosomal subunit protein uS15 (89 aa).

The protein belongs to the universal ribosomal protein uS15 family. In terms of assembly, part of the 30S ribosomal subunit. Forms a bridge to the 50S subunit in the 70S ribosome, contacting the 23S rRNA.

Functionally, one of the primary rRNA binding proteins, it binds directly to 16S rRNA where it helps nucleate assembly of the platform of the 30S subunit by binding and bridging several RNA helices of the 16S rRNA. In terms of biological role, forms an intersubunit bridge (bridge B4) with the 23S rRNA of the 50S subunit in the ribosome. The polypeptide is Small ribosomal subunit protein uS15 (Bordetella avium (strain 197N)).